The following is a 302-amino-acid chain: Sulfate adenylyltransferase subunit 2 (302 aa).

Residues 280-302 (RQGRLIDSDQSASMEQKKRQGYF) form a disordered region.

Belongs to the PAPS reductase family. CysD subfamily. Heterodimer composed of CysD, the smaller subunit, and CysN.

It catalyses the reaction sulfate + ATP + H(+) = adenosine 5'-phosphosulfate + diphosphate. It functions in the pathway sulfur metabolism; hydrogen sulfide biosynthesis; sulfite from sulfate: step 1/3. Functionally, with CysN forms the ATP sulfurylase (ATPS) that catalyzes the adenylation of sulfate producing adenosine 5'-phosphosulfate (APS) and diphosphate, the first enzymatic step in sulfur assimilation pathway. APS synthesis involves the formation of a high-energy phosphoric-sulfuric acid anhydride bond driven by GTP hydrolysis by CysN coupled to ATP hydrolysis by CysD. The polypeptide is Sulfate adenylyltransferase subunit 2 (Shewanella baltica (strain OS185)).